Reading from the N-terminus, the 591-residue chain is Asparagine synthetase [glutamine-hydrolyzing] 2 (591 aa).

Cys-2 serves as the catalytic For GATase activity. The Glutamine amidotransferase type-2 domain occupies 2–185 (CGILAVLGVA…PGHLYSSKTG (184 aa)). Residues 50–54 (RLAIV), 75–77 (NGE), and Asp-98 each bind L-glutamine. One can recognise an Asparagine synthetase domain in the interval 193-516 (PPWFSESIPS…PKNAARLTVP (324 aa)). ATP contacts are provided by residues Leu-231, Ile-267, and 341–342 (SG).

Expressed in companion cells of leaf sheath vascular bundles, and phloem-parenchyma cells, nucellar projections and nucellar epidermis of dorsal vascular bundles of grains.

The enzyme catalyses L-aspartate + L-glutamine + ATP + H2O = L-asparagine + L-glutamate + AMP + diphosphate + H(+). It functions in the pathway amino-acid biosynthesis; L-asparagine biosynthesis; L-asparagine from L-aspartate (L-Gln route): step 1/1. In terms of biological role, essential for nitrogen assimilation, distribution and remobilization within the plant via the phloem. In Oryza sativa subsp. japonica (Rice), this protein is Asparagine synthetase [glutamine-hydrolyzing] 2.